Consider the following 595-residue polypeptide: Adenine deaminase 2 (595 aa).

This sequence belongs to the metallo-dependent hydrolases superfamily. Adenine deaminase family. It depends on Mn(2+) as a cofactor.

The enzyme catalyses adenine + H2O + H(+) = hypoxanthine + NH4(+). The protein is Adenine deaminase 2 of Rhizobium etli (strain ATCC 51251 / DSM 11541 / JCM 21823 / NBRC 15573 / CFN 42).